We begin with the raw amino-acid sequence, 873 residues long: DNA mismatch repair protein MutS (873 aa).

Position 625–632 (625–632) interacts with ATP; sequence GPNMGGKS.

Belongs to the DNA mismatch repair MutS family.

Functionally, this protein is involved in the repair of mismatches in DNA. It is possible that it carries out the mismatch recognition step. This protein has a weak ATPase activity. This is DNA mismatch repair protein MutS from Xanthomonas euvesicatoria pv. vesicatoria (strain 85-10) (Xanthomonas campestris pv. vesicatoria).